A 472-amino-acid chain; its full sequence is WASH complex subunit 1 (472 aa).

Residues 1–51 (MPQNRSMESQAYSLPLILPDLRREEAIHQITDTLQHLQTVSNDIFSRILQR) are required for WASH complex assembly. Disordered regions lie at residues 289-365 (ENSR…SDGR), 377-412 (GIGK…GDLM), and 426-472 (ISGK…DWES). 2 stretches are compositionally biased toward pro residues: residues 301-319 (LPPP…PPEP) and 327-336 (SLAPPLPIPA). Residues 352–472 (QGAPKEVVNP…GDGDEEDWES (121 aa)) form a VCA region. The WH2 domain occupies 364-386 (GRASLLESIRQAGGIGKAKLRNV). Residues 385–401 (NVKEKKLEKKKMKEQEQ) show a composition bias toward basic and acidic residues.

It belongs to the WASH1 family. In terms of assembly, component of the WASH complex.

It localises to the early endosome membrane. The protein resides in the recycling endosome membrane. Acts as a nucleation-promoting factor at the surface of endosomes, where it recruits and activates the Arp2/3 complex to induce actin polymerization, playing a key role in the fission of tubules that serve as transport intermediates during endosome sorting. The chain is WASH complex subunit 1 from Xenopus tropicalis (Western clawed frog).